Reading from the N-terminus, the 243-residue chain is Protein-L-isoaspartate O-methyltransferase 2 (243 aa).

Residues 21–42 (DACADRGHPSAERSTPETERRR) are disordered. Over residues 23-42 (CADRGHPSAERSTPETERRR) the composition is skewed to basic and acidic residues. Serine 94 is an active-site residue.

It belongs to the methyltransferase superfamily. L-isoaspartyl/D-aspartyl protein methyltransferase family.

Its subcellular location is the cytoplasm. The catalysed reaction is [protein]-L-isoaspartate + S-adenosyl-L-methionine = [protein]-L-isoaspartate alpha-methyl ester + S-adenosyl-L-homocysteine. In terms of biological role, catalyzes the methyl esterification of L-isoaspartyl residues in peptides and proteins that result from spontaneous decomposition of normal L-aspartyl and L-asparaginyl residues. It plays a role in the repair and/or degradation of damaged proteins. The protein is Protein-L-isoaspartate O-methyltransferase 2 of Anaeromyxobacter sp. (strain Fw109-5).